The primary structure comprises 347 residues: MSLNLVKALKLHNEKIWDIDCYKGLLATASTDRRIKIVNIGDIGDGLVSDDGRLLDELDDSSHKKTVRSVAWRPHSTILAAGSFDSTVSIWAKDENDGDADGDGGVDDPSSFSMELLAVIEGHENEVKSVAWSKDGYFLATCSRDKSVWIWESDEMGEEYECISVLQEHSQDVKHVVWHPFKDILASSSYDDTIRIWKEYDDDWEAAAVLKGHEGTVWGSDFEKNVNTDIVRLCSGSDDTTVKIWRCVSNESIEEDWICEATLPNVHGKPVYSVSWSEDGLIASAGSDGMLVIYKENKDNVWEVVAKHEHSHSIYEINVVKWIKLNNGKSYLATAGDDGYVNIWAYN.

7 WD repeats span residues 11-48 (LHNE…DGLV), 62-101 (SHKK…GDAD), 122-161 (GHEN…EEYE), 168-207 (EHSQ…WEAA), 212-255 (GHEG…SIEE), 266-304 (VHGK…VWEV), and 311-347 (SHSI…WAYN).

It belongs to the WD repeat CIA1 family. In terms of assembly, interacts with NAR1.

The protein localises to the cytoplasm. It localises to the nucleus. Its function is as follows. Essential component of the cytosolic iron-sulfur (Fe/S) protein assembly machinery. Required for the maturation of extramitochondrial Fe/S proteins. The chain is Probable cytosolic iron-sulfur protein assembly protein 1 from Vanderwaltozyma polyspora (strain ATCC 22028 / DSM 70294 / BCRC 21397 / CBS 2163 / NBRC 10782 / NRRL Y-8283 / UCD 57-17) (Kluyveromyces polysporus).